The chain runs to 1317 residues: DNA-directed RNA polymerase subunit beta' (1317 aa).

Zn(2+)-binding residues include C60, C62, C75, and C78. 3 residues coordinate Mg(2+): D535, D537, and D539. Zn(2+) is bound by residues C890, C967, C974, and C977.

This sequence belongs to the RNA polymerase beta' chain family. As to quaternary structure, the RNAP catalytic core consists of 2 alpha, 1 beta, 1 beta' and 1 omega subunit. When a sigma factor is associated with the core the holoenzyme is formed, which can initiate transcription. The cofactor is Mg(2+). It depends on Zn(2+) as a cofactor.

The catalysed reaction is RNA(n) + a ribonucleoside 5'-triphosphate = RNA(n+1) + diphosphate. DNA-dependent RNA polymerase catalyzes the transcription of DNA into RNA using the four ribonucleoside triphosphates as substrates. The sequence is that of DNA-directed RNA polymerase subunit beta' from Nocardia farcinica (strain IFM 10152).